We begin with the raw amino-acid sequence, 151 residues long: UPF0735 ACT domain-containing protein SSP1116 (151 aa).

The region spanning 74-149 is the ACT domain; sequence TLILYVNDIV…HVSKVELISM (76 aa).

The protein belongs to the UPF0735 family.

This chain is UPF0735 ACT domain-containing protein SSP1116, found in Staphylococcus saprophyticus subsp. saprophyticus (strain ATCC 15305 / DSM 20229 / NCIMB 8711 / NCTC 7292 / S-41).